The sequence spans 268 residues: Hydroxyethylthiazole kinase (268 aa).

M49 provides a ligand contact to substrate. K124 and T168 together coordinate ATP. A195 provides a ligand contact to substrate.

This sequence belongs to the Thz kinase family. The cofactor is Mg(2+).

It carries out the reaction 5-(2-hydroxyethyl)-4-methylthiazole + ATP = 4-methyl-5-(2-phosphooxyethyl)-thiazole + ADP + H(+). It participates in cofactor biosynthesis; thiamine diphosphate biosynthesis; 4-methyl-5-(2-phosphoethyl)-thiazole from 5-(2-hydroxyethyl)-4-methylthiazole: step 1/1. In terms of biological role, catalyzes the phosphorylation of the hydroxyl group of 4-methyl-5-beta-hydroxyethylthiazole (THZ). The sequence is that of Hydroxyethylthiazole kinase from Archaeoglobus fulgidus (strain ATCC 49558 / DSM 4304 / JCM 9628 / NBRC 100126 / VC-16).